The primary structure comprises 208 residues: Small ribosomal subunit protein uS4 (208 aa).

Residues 98–161 form the S4 RNA-binding domain; sequence LRLDNVVFRL…RKVVRISEAL (64 aa).

The protein belongs to the universal ribosomal protein uS4 family. In terms of assembly, part of the 30S ribosomal subunit. Contacts protein S5. The interaction surface between S4 and S5 is involved in control of translational fidelity.

In terms of biological role, one of the primary rRNA binding proteins, it binds directly to 16S rRNA where it nucleates assembly of the body of the 30S subunit. With S5 and S12 plays an important role in translational accuracy. This chain is Small ribosomal subunit protein uS4, found in Anaeromyxobacter sp. (strain Fw109-5).